The chain runs to 140 residues: Holo-[acyl-carrier-protein] synthase (140 aa).

Residues D8 and E62 each coordinate Mg(2+).

Belongs to the P-Pant transferase superfamily. AcpS family. Mg(2+) is required as a cofactor.

The protein localises to the cytoplasm. It carries out the reaction apo-[ACP] + CoA = holo-[ACP] + adenosine 3',5'-bisphosphate + H(+). In terms of biological role, transfers the 4'-phosphopantetheine moiety from coenzyme A to a Ser of acyl-carrier-protein. This chain is Holo-[acyl-carrier-protein] synthase, found in Cupriavidus taiwanensis (strain DSM 17343 / BCRC 17206 / CCUG 44338 / CIP 107171 / LMG 19424 / R1) (Ralstonia taiwanensis (strain LMG 19424)).